The primary structure comprises 188 residues: Transmembrane protein 160 (188 aa).

The N-terminal 96 residues, 1–96 (MGGGWWWARA…ISFMQSDMGR (96 aa)), are a transit peptide targeting the mitochondrion. Residues 25-52 (PPRPRSGGARGSFAPGHGPRAGASPPPV) are disordered. A compositionally biased stretch (low complexity) spans 29–38 (RSGGARGSFA). S48 carries the phosphoserine modification. The next 2 membrane-spanning stretches (helical) occupy residues 102–122 (FFLL…VGLA) and 135–155 (AAAG…AVGL).

Belongs to the TMEM160 family.

Its subcellular location is the mitochondrion inner membrane. The protein is Transmembrane protein 160 of Bos taurus (Bovine).